A 260-amino-acid polypeptide reads, in one-letter code: Snake venom serine protease gussurobin (260 aa).

A signal peptide spans 1 to 18; sequence MVLIRVLANLLILQLSYA. A propeptide spanning residues 19 to 24 is cleaved from the precursor; it reads QKSSEL. In terms of domain architecture, Peptidase S1 spans 25–251; it reads IIGGDECNIN…YTEWIQSTIA (227 aa). Intrachain disulfides connect Cys31/Cys165, Cys52/Cys68, Cys100/Cys258, Cys144/Cys212, Cys176/Cys191, and Cys202/Cys227. Residues His67 and Asp112 each act as charge relay system in the active site. Residues Asn123 and Asn124 are each glycosylated (N-linked (GlcNAc...) asparagine). Ser206 (charge relay system) is an active-site residue.

This sequence belongs to the peptidase S1 family. Snake venom subfamily. Monomer. As to expression, expressed by the venom gland.

The protein resides in the secreted. Its function is as follows. Snake venom serine protease that may act in the hemostasis system of the prey. This is Snake venom serine protease gussurobin from Gloydius ussuriensis (Ussuri mamushi).